We begin with the raw amino-acid sequence, 368 residues long: DNA integrity scanning protein DisA (368 aa).

Residues 15 to 153 enclose the DAC domain; sequence DERLRATLAA…DGRRHVLDEP (139 aa). Residues glycine 82, leucine 100, and 113 to 117 contribute to the ATP site; that span reads TRHRS. The disordered stretch occupies residues 101 to 121; it reads QPDPSIPTNESGTRHRSAERT. A compositionally biased stretch (basic and acidic residues) spans 112 to 121; that stretch reads GTRHRSAERT.

It belongs to the DisA family. As to quaternary structure, homooctamer. The cofactor is Mg(2+).

The catalysed reaction is 2 ATP = 3',3'-c-di-AMP + 2 diphosphate. Participates in a DNA-damage check-point. DisA forms globular foci that rapidly scan along the chromosomes searching for lesions. Its function is as follows. Also has diadenylate cyclase activity, catalyzing the condensation of 2 ATP molecules into cyclic di-AMP (c-di-AMP). c-di-AMP likely acts as a signaling molecule that may couple DNA integrity with a cellular process. The polypeptide is DNA integrity scanning protein DisA (Acidothermus cellulolyticus (strain ATCC 43068 / DSM 8971 / 11B)).